The chain runs to 517 residues: ATP synthase subunit beta (517 aa).

167 to 174 (GGAGVGKT) is a binding site for ATP. 2 stretches are compositionally biased toward basic and acidic residues: residues 475-484 (AESMGAKMDD) and 495-508 (DSKD…KADD). The segment at 475 to 517 (AESMGAKMDDGGSDGAPPPSDSKDKGKGDSKADDKGDDADKDA) is disordered.

It belongs to the ATPase alpha/beta chains family. In terms of assembly, F-type ATPases have 2 components, CF(1) - the catalytic core - and CF(0) - the membrane proton channel. CF(1) has five subunits: alpha(3), beta(3), gamma(1), delta(1), epsilon(1). CF(0) has three main subunits: a(1), b(2) and c(9-12). The alpha and beta chains form an alternating ring which encloses part of the gamma chain. CF(1) is attached to CF(0) by a central stalk formed by the gamma and epsilon chains, while a peripheral stalk is formed by the delta and b chains.

It is found in the cell membrane. The catalysed reaction is ATP + H2O + 4 H(+)(in) = ADP + phosphate + 5 H(+)(out). Produces ATP from ADP in the presence of a proton gradient across the membrane. The catalytic sites are hosted primarily by the beta subunits. The protein is ATP synthase subunit beta of Mycobacterium sp. (strain JLS).